The following is a 208-amino-acid chain: Small ribosomal subunit protein uS3 (208 aa).

Positions 17–86 constitute a KH type-2 domain; it reads IDEYLEKELR…NPQIEVEEIK (70 aa).

It belongs to the universal ribosomal protein uS3 family. As to quaternary structure, part of the 30S ribosomal subunit.

In terms of biological role, binds the lower part of the 30S subunit head. The sequence is that of Small ribosomal subunit protein uS3 from Thermococcus onnurineus (strain NA1).